Here is a 327-residue protein sequence, read N- to C-terminus: BarH-like 1 homeobox protein (327 aa).

Disordered stretches follow at residues 1 to 90 (MEGS…AQSR), 113 to 181 (PYSS…PRKA), and 303 to 327 (LQGA…AQPR). Over residues 33 to 54 (RSPLELSPRSESSSDCSSPASP) the composition is skewed to low complexity. Over residues 79–90 (QPGQLSAPAQSR) the composition is skewed to polar residues. Basic and acidic residues-rich tracts occupy residues 133 to 143 (AGEDFRDKLDK) and 152 to 166 (SEYK…EISS). The homeobox DNA-binding region spans 178 to 237 (PRKARTAFTDHQLAQLERSFERQKYLSVQDRMELAASLNLTDTQVKTWYQNRRTKWKRQT). Pro residues predominate over residues 308–318 (EPPPPLPPLPG).

It belongs to the BAR homeobox family.

Its subcellular location is the nucleus. The sequence is that of BarH-like 1 homeobox protein (Barhl1) from Mus musculus (Mouse).